Here is a 49-residue protein sequence, read N- to C-terminus: Large ribosomal subunit protein bL33 (49 aa).

The protein belongs to the bacterial ribosomal protein bL33 family.

The chain is Large ribosomal subunit protein bL33 from Syntrophotalea carbinolica (strain DSM 2380 / NBRC 103641 / GraBd1) (Pelobacter carbinolicus).